The chain runs to 637 residues: Early transcription factor 70 kDa subunit (637 aa).

The Helicase ATP-binding domain occupies 32-185 (RTIIDENRSV…GHIIDLMSEE (154 aa)). 45 to 52 (HIMGSGKT) serves as a coordination point for ATP. The short motif at 135-138 (DEAH) is the DEXH box element. Residues 327 to 507 (KFKYFINRIQ…VLPFDIKKLL (181 aa)) form the Helicase C-terminal domain.

The protein belongs to the helicase family. VETF subfamily. As to quaternary structure, heterodimer of a 70 kDa and a 82 kDa subunit. Part of the early transcription complex composed of ETF, RAP94/OPG109, and the DNA-directed RNA polymerase.

The protein resides in the virion. In terms of biological role, acts with RNA polymerase to initiate transcription from early gene promoters. Is recruited by the RPO-associated protein of 94 kDa RAP94/OPG109 to form the early transcription complex, which also contains the core RNA polymerase. ETF heterodimer binds to early gene promoters. The chain is Early transcription factor 70 kDa subunit (OPG118) from Homo sapiens (Human).